A 1384-amino-acid chain; its full sequence is MEVLMAERANLVFHNKVIDGTAIKRLISRLIDHFGMAYTSHILDQVKTLGFQQATATSISLGIDDLLTIPSKGWLVQDAEQQSLILEKHHHYGNVHAVEKLRQSIEIWYATSEYLRQEMNPNFRMTDPFNPVHMMSFSGARGNASQVHQLVGMRGLMSDPQGQMIDLPIQSNLREGLSLTEYIISCYGARKGVVDTAVRQSDAGYLTRRLVEVVQHIVVRRTDCGTIRGISVSPRNKSRMMSERIFIQTLIGRVLADDIYIGSRCVAFRNQDLGIGLVNRFITFGTQPISIRTPFTCRSTSWICRLCYGRSPTHGDLVELGEAVGIIAGQSIGEPGTQLTLRTFHTGGVFTGGTAEHVRAPYNGKIKFNEDLVHSTRTRHGHPAFLCYIDLSVIIESEDIIHSVTIPPKSFLLVQNDQYVESEQVIAEIREGTYTFQFKERVRKYIYSDSEGGMHWSTDVSHAPEFTYSNVHLLPKTSHLWILSGGSCGSSLILFSIHKDQDQMNIPFLSVERKSISSLSVNNDQVSQKFFSSDFSDKKILIPNYSELNGIVGTSHYNFIYSAIFHENSDLLAKRRRNRFLIPFQSIQEQEQEKEFIPHSGISVEIPINGIFRRNSIFAFFDDPRYRRKSSGILKYGTLKADSIIQKEDMIEYRGVQKFKTKYEMKVDRFFFIPEEVHILPESSAIMVENYSIIGVDTRITLNIRSQVGGLIRVERKKKRIELKIFSGDIHFPDKTDKISRHSGILIPPGRGKTNSKESKIVKNWIYVQRITPTKKKFFVLVRPVATYEIADSINLATLFPKDLFREKDNIQLRVFNYILYGNGKPTRGISDTSIQLVRTCLVLNWDQDNKNSSLEEVRAFFVEVNTKGLIRDFIRIGLVKSHISYIRKRNNPSSEKKEGSDHSMNPFYSISPKAGILHQSLRQNHGTIRMFLNRNRNPILLILSSSNCFRIGPFNHVKYHNVINQSIKKKTSNYIKNCRAPYGTAIQILIFIHFAFTKLINQISCIKYLHLQTSNVFFPVIHSYLIDENGRIFNLDPYSNLVLNPFKLNWYFLHQNYNNNYCEETSTIISLGQFFCENVCIAKKEPYLKSGQVLIVQRDSVVIRSAKPYLATPGAKVHGHYREILYEGDTLVTFIYEKSRSGDITQGLPKVEQVLEVRSIDSISLNLEKRIKGWNRCITRILGIPWGFLIGAELTIVQSRISLVNKIKQVYRSQGVQIHNRHIEIIVRQITSKVLVSEEGMSNVFLPGELIGLLRAERTGRALEEAICYRAVLLGITRASLNTQSFISEASFQETARVLAKAALRGRIDWLKGLKENVVLGGVIPPGPGSQRIGALSTATYQHSFGKNKNYLIRGRYERYFILPQGILCLFYQIQNLPFLELH.

Zn(2+)-binding residues include Cys-224, Cys-297, Cys-304, and Cys-307.

This sequence belongs to the RNA polymerase beta' chain family. RpoC2 subfamily. In terms of assembly, in plastids the minimal PEP RNA polymerase catalytic core is composed of four subunits: alpha, beta, beta', and beta''. When a (nuclear-encoded) sigma factor is associated with the core the holoenzyme is formed, which can initiate transcription. The cofactor is Zn(2+).

The protein localises to the plastid. The protein resides in the chloroplast. The enzyme catalyses RNA(n) + a ribonucleoside 5'-triphosphate = RNA(n+1) + diphosphate. Functionally, DNA-dependent RNA polymerase catalyzes the transcription of DNA into RNA using the four ribonucleoside triphosphates as substrates. The protein is DNA-directed RNA polymerase subunit beta'' of Sinapis alba (White mustard).